A 257-amino-acid chain; its full sequence is Small ribosomal subunit protein uS2 (257 aa).

The protein belongs to the universal ribosomal protein uS2 family.

This chain is Small ribosomal subunit protein uS2, found in Bartonella henselae (strain ATCC 49882 / DSM 28221 / CCUG 30454 / Houston 1) (Rochalimaea henselae).